The primary structure comprises 546 residues: MSKDPGRILIFDTTLRDGEQSPGASLNLEEKLAIAHQLARLGVDVIEAGFPFASPGDFKAVNKISEVVGGENGPIICGLARASTSDIKACYEAIIPAPKKRIHTFIATSDIHLKHKLRKSRKDVLSIVPEMVSYAKSLVDDIEFSCEDASRSDPEFLYEVIQLAITSGATTINIPDTVGFTTPSEFGKLIFDINKNVPNIDEAVISVHGHNDLGLAVANFLEAAKNGARQLECTINGIGERAGNASLEELVMALHVRKSFFNSFFGRSSDSPTPLTAIRTEEITKTSRLVSNLTGMNVQPNKAIVGANAFAHESGIHQDGVLKNRLTYEIIDAKTVGLNDNKISLGKLSGRSAVRARLEEMGYDLSREDLNDAFARFKDLADRKREITDRDLEAIVSEQVQLPESRFQLSHVQVSCGSTSKPTATVTILNTETHTEDTSVAIGTGPVDAVCEAINELAKVPNELIEFSVKSVTEGIDALGEVTIRIRNKNKIYSGHSADTDVVVAAANAFLNALNRLIFSEKKECIHPQFDNLENSEKKVFSNPKN.

The Pyruvate carboxyltransferase domain occupies 8-271 (ILIFDTTLRD…NSFFGRSSDS (264 aa)). Positions 17, 208, 210, and 244 each coordinate Mn(2+). The regulatory domain stretch occupies residues 408-546 (QLSHVQVSCG…EKKVFSNPKN (139 aa)).

The protein belongs to the alpha-IPM synthase/homocitrate synthase family. LeuA type 1 subfamily. In terms of assembly, homodimer. Mn(2+) serves as cofactor.

Its subcellular location is the cytoplasm. It carries out the reaction 3-methyl-2-oxobutanoate + acetyl-CoA + H2O = (2S)-2-isopropylmalate + CoA + H(+). It participates in amino-acid biosynthesis; L-leucine biosynthesis; L-leucine from 3-methyl-2-oxobutanoate: step 1/4. In terms of biological role, catalyzes the condensation of the acetyl group of acetyl-CoA with 3-methyl-2-oxobutanoate (2-ketoisovalerate) to form 3-carboxy-3-hydroxy-4-methylpentanoate (2-isopropylmalate). The polypeptide is 2-isopropylmalate synthase (Prochlorococcus marinus (strain MIT 9515)).